A 205-amino-acid chain; its full sequence is uncharacterized protein (205 aa).

The next 4 membrane-spanning stretches (helical) occupy residues 18 to 38, 69 to 89, 106 to 126, and 127 to 147; these read ATVN…GTIG, LGIF…CFYA, VVWI…YYIM, and LLHP…LFLI.

It is found in the mitochondrion membrane. This is an uncharacterized protein from Arabidopsis thaliana (Mouse-ear cress).